Here is a 254-residue protein sequence, read N- to C-terminus: Winged helix repair factor 1 (254 aa).

The Bipartite nuclear localization signal motif lies at 4–21; the sequence is KRRLLASEAFGVKRRRAP. 3 winged helix domain regions span residues 32 to 104, 120 to 179, and 180 to 254; these read RAGS…GIVF, PCAG…LAVP, and GAGR…LPDT.

Belongs to the STK19 family. In terms of assembly, monomer in solution. Homodimer; when bound to DNA. Component of a transcription-coupled nucleotide excision repair (TC-NER) complex composed of STK19, ERCC6, ERCC8, DDA1, DDB1, ELOF1 and UVSSA which assembles and interacts with the multiprotein RNA polymerase II complex when it stalls at DNA lesions.

Its subcellular location is the nucleus. Its function is as follows. DNA-binding protein which is required for efficient transcription-coupled nucleotide excision repair (TC-NER). Acts as part of a TC-NER complex which assembles and interacts with RNA polymerase II (RNAPII) when it stalls at DNA lesions. TC-NER complex subunit UVSSA binds to the GTF2H1/p62 subunit of the TFIIH transcription factor complex, tethering TFIIH to the TC-NER complex. WHR1/STK19 then interacts with the XPD helicase subunit of TFIIH which guides TFIIH to DNA downstream of the stalled RNAPII, ensuring DNA repair. Directly interacts with RNAPII and also binds to downstream DNA. Promotes the timely removal of DNA damage-stalled RNAPII, allowing downstream NER factors to access DNA lesions. Required for monoubiquitination of UVSSA. Regulates repositioning and stabilization of UVSSA within the TC-NER complex. Stimulates ubiquitination of RNAPII complex member RBP1. Also binds to RNA and regulates the expression levels of many mRNAs. This is Winged helix repair factor 1 from Mus musculus (Mouse).